A 371-amino-acid polypeptide reads, in one-letter code: Liposome tubulation protein MamY (371 aa).

Over 1 to 18 (MLMNFVNNVSKTINGGAR) the chain is Cytoplasmic. A helical transmembrane segment spans residues 19 to 39 (IVYVGSFSWAVLSLLFVTAFS). Residues 40–51 (GWNNIFSMLPHE) are Lumenal-facing. A helical membrane pass occupies residues 52–72 (IFILVLTISLPIALIVLIFML). At 73 to 371 (SQIVRTVESV…LIDGTPISDA (299 aa)) the chain is on the cytoplasmic side.

It belongs to the magnetosome MamY family. In terms of assembly, probably interacts with MamX and MamZ proteins.

Its subcellular location is the magnetosome membrane. Its function is as follows. May be involved in constriction of the cell inner membrane to form mature magnetosomes. Binds cardiolipin and liposomes. May function with MamX, MamZ amd Mms6 in biomineralization. This chain is Liposome tubulation protein MamY, found in Magnetospirillum gryphiswaldense (strain DSM 6361 / JCM 21280 / NBRC 15271 / MSR-1).